The chain runs to 91 residues: Small ribosomal subunit protein bS20 (91 aa).

Residues 1–21 show a composition bias toward basic and acidic residues; it reads MPLHKSAEKRLRQAARRNERN. Positions 1–24 are disordered; the sequence is MPLHKSAEKRLRQAARRNERNRAR.

Belongs to the bacterial ribosomal protein bS20 family.

Functionally, binds directly to 16S ribosomal RNA. The sequence is that of Small ribosomal subunit protein bS20 from Chlorobaculum parvum (strain DSM 263 / NCIMB 8327) (Chlorobium vibrioforme subsp. thiosulfatophilum).